A 631-amino-acid polypeptide reads, in one-letter code: ATP-dependent RNA helicase mrh4, mitochondrial (631 aa).

A mitochondrion-targeting transit peptide spans 1–39 (MYPLGRVSLPVRSPVCLFCQNRTSSLLPSAYVWQSARTM). The interval 55-111 (PNVAKTSLKKKRNDTDRFGPFAGMNQTEARIRDDPRSRSPASLKRSKAPSDESGRKD) is disordered. Over residues 102–111 (APSDESGRKD) the composition is skewed to basic and acidic residues. Residues 143–176 (TSFDQFPLLPVVRHSIFSQALPGLHDVTPTPIQR) carry the Q motif motif. The disordered stretch occupies residues 181–200 (RLLDDTNKDKKPKKRAEGEP). Positions 196 to 408 (AEGEPEYDQY…RKKYPDIQRL (213 aa)) constitute a Helicase ATP-binding domain. An ATP-binding site is contributed by 209–216 (AETGSGKT). The DEAD box motif lies at 355–358 (DEAD). In terms of domain architecture, Helicase C-terminal spans 442–631 (DVIWSIGKAG…EGMFRGQALI (190 aa)).

Belongs to the DEAD box helicase family. MRH4 subfamily.

It localises to the mitochondrion. It carries out the reaction ATP + H2O = ADP + phosphate + H(+). Functionally, ATP-binding RNA helicase involved in mitochondrial RNA metabolism. Required for maintenance of mitochondrial DNA. The protein is ATP-dependent RNA helicase mrh4, mitochondrial (mrh4) of Aspergillus terreus (strain NIH 2624 / FGSC A1156).